Consider the following 316-residue polypeptide: Transaldolase (316 aa).

The active-site Schiff-base intermediate with substrate is the lysine 131.

This sequence belongs to the transaldolase family. Type 1 subfamily. As to quaternary structure, homodimer.

The protein localises to the cytoplasm. It carries out the reaction D-sedoheptulose 7-phosphate + D-glyceraldehyde 3-phosphate = D-erythrose 4-phosphate + beta-D-fructose 6-phosphate. The protein operates within carbohydrate degradation; pentose phosphate pathway; D-glyceraldehyde 3-phosphate and beta-D-fructose 6-phosphate from D-ribose 5-phosphate and D-xylulose 5-phosphate (non-oxidative stage): step 2/3. Its function is as follows. Transaldolase is important for the balance of metabolites in the pentose-phosphate pathway. In Buchnera aphidicola subsp. Baizongia pistaciae (strain Bp), this protein is Transaldolase.